Reading from the N-terminus, the 369-residue chain is 3-dehydroquinate synthase (369 aa).

Residues 75–80 (DGEEHK), 109–113 (GVIGD), 133–134 (TT), Lys146, Lys155, and 173–176 (TLKT) each bind NAD(+). The Zn(2+) site is built by Glu188, His251, and His268.

This sequence belongs to the sugar phosphate cyclases superfamily. Dehydroquinate synthase family. The cofactor is Co(2+). It depends on Zn(2+) as a cofactor. Requires NAD(+) as cofactor.

Its subcellular location is the cytoplasm. The catalysed reaction is 7-phospho-2-dehydro-3-deoxy-D-arabino-heptonate = 3-dehydroquinate + phosphate. Its pathway is metabolic intermediate biosynthesis; chorismate biosynthesis; chorismate from D-erythrose 4-phosphate and phosphoenolpyruvate: step 2/7. In terms of biological role, catalyzes the conversion of 3-deoxy-D-arabino-heptulosonate 7-phosphate (DAHP) to dehydroquinate (DHQ). In Legionella pneumophila (strain Lens), this protein is 3-dehydroquinate synthase.